A 127-amino-acid polypeptide reads, in one-letter code: uncharacterized protein (127 aa).

A signal peptide spans 1–16 (MIKKIIFGIAILLSLS). A lipid anchor (N-palmitoyl cysteine) is attached at cysteine 17. The S-diacylglycerol cysteine moiety is linked to residue cysteine 17. Positions 56-101 (EVRKEIQEYRVEIVDINKKKRELYNSLSKEAQNFLAEQQKYKQKLS) form a coiled coil. The disordered stretch occupies residues 101-127 (SISKLPTEDDSPNNTANSKDNKDTDTK).

The protein localises to the cell membrane. This is an uncharacterized protein from Rickettsia felis (strain ATCC VR-1525 / URRWXCal2) (Rickettsia azadi).